A 279-amino-acid polypeptide reads, in one-letter code: Ribosomal RNA large subunit methyltransferase E (279 aa).

A compositionally biased stretch (basic and acidic residues) spans 1–10 (MSDDDQKPED). The disordered stretch occupies residues 1–66 (MSDDDQKPED…MKKGGDARAA (66 aa)). Residues glycine 136, tryptophan 138, aspartate 154, aspartate 170, and aspartate 194 each coordinate S-adenosyl-L-methionine. Catalysis depends on lysine 234, which acts as the Proton acceptor.

This sequence belongs to the class I-like SAM-binding methyltransferase superfamily. RNA methyltransferase RlmE family.

Its subcellular location is the cytoplasm. It carries out the reaction uridine(2552) in 23S rRNA + S-adenosyl-L-methionine = 2'-O-methyluridine(2552) in 23S rRNA + S-adenosyl-L-homocysteine + H(+). Specifically methylates the uridine in position 2552 of 23S rRNA at the 2'-O position of the ribose in the fully assembled 50S ribosomal subunit. This is Ribosomal RNA large subunit methyltransferase E from Maricaulis maris (strain MCS10) (Caulobacter maris).